Here is a 130-residue protein sequence, read N- to C-terminus: Large ribosomal subunit protein bL12 (130 aa).

It belongs to the bacterial ribosomal protein bL12 family. As to quaternary structure, homodimer. Part of the ribosomal stalk of the 50S ribosomal subunit. Forms a multimeric L10(L12)X complex, where L10 forms an elongated spine to which 2 to 4 L12 dimers bind in a sequential fashion. Binds GTP-bound translation factors.

Its function is as follows. Forms part of the ribosomal stalk which helps the ribosome interact with GTP-bound translation factors. Is thus essential for accurate translation. In Mycolicibacterium gilvum (strain PYR-GCK) (Mycobacterium gilvum (strain PYR-GCK)), this protein is Large ribosomal subunit protein bL12.